A 468-amino-acid chain; its full sequence is Mitochondrial distribution and morphology protein 10 (468 aa).

Residues 370–386 are compositionally biased toward basic and acidic residues; the sequence is ERDGLPGIQRDDHDMHH. The disordered stretch occupies residues 370-394; that stretch reads ERDGLPGIQRDDHDMHHHPQRPHAS.

It belongs to the MDM10 family. Component of the ER-mitochondria encounter structure (ERMES) or MDM complex, composed of MMM1, MDM10, MDM12 and MDM34. Associates with the mitochondrial outer membrane sorting assembly machinery SAM(core) complex.

The protein resides in the mitochondrion outer membrane. Component of the ERMES/MDM complex, which serves as a molecular tether to connect the endoplasmic reticulum and mitochondria. Components of this complex are involved in the control of mitochondrial shape and protein biogenesis and may function in phospholipid exchange. MDM10 is involved in the late assembly steps of the general translocase of the mitochondrial outer membrane (TOM complex). Functions in the TOM40-specific route of the assembly of outer membrane beta-barrel proteins, including the association of TOM40 with the receptor TOM22 and small TOM proteins. Can associate with the SAM(core) complex as well as the MDM12-MMM1 complex, both involved in late steps of the major beta-barrel assembly pathway, that is responsible for biogenesis of all outer membrane beta-barrel proteins. May act as a switch that shuttles between both complexes and channels precursor proteins into the TOM40-specific pathway. Plays a role in mitochondrial morphology and in the inheritance of mitochondria. This Ajellomyces dermatitidis (strain ER-3 / ATCC MYA-2586) (Blastomyces dermatitidis) protein is Mitochondrial distribution and morphology protein 10.